Reading from the N-terminus, the 352-residue chain is Macrophage-capping protein (352 aa).

N-acetylmethionine is present on M1. One copy of the Gelsolin-like 1 repeat lies at 27-75 (EKLKPVPIARESHGIFFSGDSYLVLHNGPEEASHLHLWIGQQSSRDEQG). Residues 139–148 (RKLYQVKGKK) carry the Nuclear localization signal motif. Gelsolin-like repeat units follow at residues 150–190 (IRAT…LERN) and 265–311 (MNLT…KERQ). At S341 the chain carries Phosphoserine.

It belongs to the villin/gelsolin family. As to quaternary structure, interacts with NUP62. Interacts with NUTF2 and RAN; involved in CAPG nuclear import. In terms of processing, phosphorylated. Nuclear GCAP39 is more highly phosphorylated than cytoplasmic GCAP39. In terms of tissue distribution, present in a large variety of tissues and is particularly abundant in kidney and lung. Highly expressed in macrophages (at protein level).

It is found in the nucleus. The protein localises to the cytoplasm. The protein resides in the melanosome. It localises to the cell projection. Its subcellular location is the lamellipodium. It is found in the ruffle. Calcium-sensitive protein which reversibly blocks the barbed ends of actin filaments but does not sever preformed actin filaments. May play an important role in macrophage function. May play a role in regulating cytoplasmic and/or nuclear structures through potential interactions with actin. May bind DNA. Uncapping occurs either when Ca(2+) falls or when the concentration of polyphosphoinositide rises, both at low and high Ca(2+). The sequence is that of Macrophage-capping protein (Capg) from Mus musculus (Mouse).